Reading from the N-terminus, the 469-residue chain is IAA-alanine resistance protein 1 (469 aa).

An N-terminal signal peptide occupies residues 1–28 (MSFSLRKLLVPILVLVLFLDLCVESGFS). The disordered stretch occupies residues 33–58 (ARDDHVHHHGGGCSHSHDHDHDHDHD). Basic and acidic residues predominate over residues 47–58 (HSHDHDHDHDHD). 2 consecutive transmembrane segments (helical) span residues 114-134 (CSLL…IMFV) and 141-161 (WFVD…AFLH). Positions 170-197 (GHSHSNDHHENHDHHDHSHSDSPSHSHS) are disordered. Positions 173-193 (HSNDHHENHDHHDHSHSDSPS) are enriched in basic and acidic residues. Residues 201-221 (LSVGLSVLAGIVVFLLVEKLV) traverse the membrane as a helical segment. The interval 228 to 315 (SSGSNTWGHH…GKSDKPEQVE (88 aa)) is disordered. Positions 235–246 (GHHHHHHHAGSK) are enriched in basic residues. The span at 247-256 (KLKDEGDHNN) shows a compositional bias: basic and acidic residues. Residues 257-279 (LDQQSSSDAIVNSSEKVSGGSTD) are compositionally biased toward polar residues. A compositionally biased stretch (basic and acidic residues) spans 292–315 (ATDKSDSGTEITSDGKSDKPEQVE). Transmembrane regions (helical) follow at residues 387 to 407 (LFFN…VLVW), 415 to 435 (SLIE…GVLA), and 448 to 468 (SACH…ISLI).

This sequence belongs to the ZIP transporter (TC 2.A.5) family. KE4/Catsup subfamily.

Its subcellular location is the membrane. Functionally, may participate in auxin metabolism or response. Probable transporter. The chain is IAA-alanine resistance protein 1 (IAR1) from Arabidopsis thaliana (Mouse-ear cress).